Here is a 147-residue protein sequence, read N- to C-terminus: Fibromodulin (147 aa).

6 LRR repeats span residues 1 to 15 (LDHNNLTRMPGPLPR), 16 to 37 (SLRELHLDHNQISRVPNNALEG), 40 to 61 (NLTALYLQHNEIQEVGSSMRGL), 63 to 84 (SLILLDLSYNHLRRVPDGLPSA), 85 to 105 (LEQLYLEHNNVYTVPDSYFRG), and 108 to 128 (KLLYVRLSHNSLTNSGLASNT). Asparagine 5 is a glycosylation site (N-linked (GlcNAc...) asparagine). Asparagine 40 carries an N-linked (GlcNAc...) asparagine glycan. An N-linked (GlcNAc...) asparagine glycan is attached at asparagine 130. The stretch at 133–147 (SLLELDLSYNQLQKI) is one LRR 7 repeat.

The protein belongs to the small leucine-rich proteoglycan (SLRP) family. SLRP class II subfamily. Binds to type I and type II collagen. In terms of processing, binds keratan sulfate chains. Post-translationally, sulfated on tyrosine residues. The N-terminus is blocked by a pyrrolidone carboxylic acid generated by post-translational modification of N-terminal glutamine.

The protein localises to the secreted. The protein resides in the extracellular space. It is found in the extracellular matrix. Affects the rate of fibrils formation. May have a primary role in collagen fibrillogenesis. This is Fibromodulin (FMOD) from Oryctolagus cuniculus (Rabbit).